The chain runs to 135 residues: Transcription antitermination protein NusB (135 aa).

It belongs to the NusB family.

Involved in transcription antitermination. Required for transcription of ribosomal RNA (rRNA) genes. Binds specifically to the boxA antiterminator sequence of the ribosomal RNA (rrn) operons. This chain is Transcription antitermination protein NusB, found in Wolinella succinogenes (strain ATCC 29543 / DSM 1740 / CCUG 13145 / JCM 31913 / LMG 7466 / NCTC 11488 / FDC 602W) (Vibrio succinogenes).